The primary structure comprises 215 residues: WAT1-related protein At3g28060 (215 aa).

Transmembrane regions (helical) follow at residues 48 to 68, 82 to 102, 117 to 137, 146 to 166, and 176 to 196; these read IIIGSSGEVFWVEYTLIAVAY, FALALSHNVCVSISCAFVSLF, IMLICIVATGVVNSTSYVVES, VFLAMFRPLSIVTAVVLGAIF, and VIGGTLISIGFSVHNSLFHIA. The EamA domain maps to 65 to 186; it reads AVAYIVQTHI…IGGTLISIGF (122 aa).

It belongs to the drug/metabolite transporter (DMT) superfamily. Plant drug/metabolite exporter (P-DME) (TC 2.A.7.4) family.

The protein localises to the membrane. This chain is WAT1-related protein At3g28060, found in Arabidopsis thaliana (Mouse-ear cress).